Here is a 7152-residue protein sequence, read N- to C-terminus: Replicase polyprotein 1ab (7152 aa).

One can recognise a CoV Nsp1 globular domain in the interval 54–174; the sequence is YDNHVKIDCR…HKWFQFCRLY (121 aa). The region spanning 192-222 is the BetaCoV Nsp1 C-terminal domain; it reads FSVEDAYAEVHAEPKGKYSQKAYALLRQYRG. One can recognise a CoV Nsp2 N-terminal domain in the interval 226–488; the sequence is VLFVDQYGCD…LITHALYLDY (263 aa). Positions 365, 370, 386, and 389 each coordinate Zn(2+). Residues 365–389 are C4; it reads CFNDNCDFYGWVSGNMMDGFSCPLC. The region spanning 493–681 is the CoV Nsp2 middle domain; it reads CGNLEQNHIL…VNKFYTFFKL (189 aa). The CoV Nsp2 C-terminal domain occupies 697–809; it reads LKTINGLVCI…LDQAWRFPCA (113 aa). One can recognise a Ubiquitin-like 1 domain in the interval 811–923; sequence RKVNFNEKPV…MYCTFAIEDV (113 aa). 11 tandem repeats follow at residues 945 to 954, 955 to 964, 965 to 974, 975 to 984, 985 to 994, 995 to 1004, 1005 to 1014, 1015 to 1024, 1025 to 1034, 1035 to 1044, and 1045 to 1054. An 11 X 10 AA tandem repeat of N-[DN]-D-E-D-V-V-T-G-D region spans residues 945–1054; sequence NDDEDVVTGD…NDDEDVVTGD (110 aa). Residues 947 to 1036 are disordered; that stretch reads DEDVVTGDND…DEDVVTGDND (90 aa). The region spanning 1093–1343 is the Peptidase C16 1 domain; sequence VFNDVYNDAL…VCFVKGDIIN (251 aa). Cys1131 functions as the For PL1-PRO activity in the catalytic mechanism. The Zn(2+) site is built by Cys1208, Cys1211, Cys1234, and Cys1236. Residues 1208–1236 form a C4-type 1 zinc finger; it reads CLKCGFSFDLNGLDAVFFYGDIVSHVCKC. Residues His1282 and Asp1293 each act as for PL1-PRO activity in the active site. A Macro domain is found at 1321–1492; the sequence is ELAQLYGLCI…IIQKCQITSV (172 aa). The region spanning 1548–1619 is the DPUP domain; the sequence is NDVRDYLLSK…TVNQVCVLLA (72 aa). Positions 1619 to 1674 constitute a Ubiquitin-like 2 domain; that stretch reads AKKIDVLLTVDGVNFKSISLTVGEVFGKILGNVFCDGIDVTKLKCSDFYADKILYQ. Residues 1688–1948 enclose the Peptidase C16 2 domain; that stretch reads SSFGFDQQQL…MVAYNPDLSQ (261 aa). The active-site For PL2-PRO activity is Cys1727. Cys1805, Cys1807, Cys1839, and Cys1841 together coordinate Zn(2+). Residues 1805–1841 form a C4-type 2 zinc finger; that stretch reads CDCGIKQESRVGVDAVMHFGTLAKTDLFNGYKIGCNC. Residues His1884 and Asp1898 each act as for PL2-PRO activity in the active site. A Nucleic acid-binding domain is found at 1962 to 2063; the sequence is IKAQFKPFAK…TYFNKPSFKS (102 aa). In terms of domain architecture, G2M spans 2078–2227; that stretch reads ESQGNVVTSV…NDKTIFYTTE (150 aa). Helical transmembrane passes span 2196-2216, 2257-2277, and 2288-2308; these read AIEF…LLHF, FLVV…NVIF, and FPIF…LVTI. Positions 2196-2433 are HD1; it reads AIEFYGFLKW…FVLLRFYIVV (238 aa). A 3Ecto domain is found at 2293–2354; the sequence is GRIVMWIKAT…AIDFVQYEVD (62 aa). Intrachain disulfides connect Cys2309/Cys2333 and Cys2324/Cys2330. Helical transmembrane passes span 2371–2391 and 2413–2433; these read LVIG…LIGL and FIVF…YIVV. The tract at residues 2441 to 2531 is Y1; it reads GFIRHIVYGC…ELKRPVNPTD (91 aa). Residues 2441–2808 enclose the CoV Nsp3 Y domain; it reads GFIRHIVYGC…LTTPFSLKGG (368 aa). Positions 2445, 2450, 2455, 2458, 2491, 2494, 2498, and 2501 each coordinate Zn(2+). A ZF1 region spans residues 2445-2458; sequence HIVYGCNKAGCLFC. The tract at residues 2491 to 2501 is ZF2; the sequence is CVKHQWNCFNC. The interval 2532 to 2624 is Y2; the sequence is ASHYVVTDIK…LVDKKLITTA (93 aa). Residues 2532–2808 are coV-Y; it reads ASHYVVTDIK…LTTPFSLKGG (277 aa). A Y3 region spans residues 2625–2707; it reads CNGISVTQTM…KSMISAVAAG (83 aa). The segment at 2708–2808 is Y4; the sequence is LEFTDENYNN…LTTPFSLKGG (101 aa). 5 consecutive transmembrane segments (helical) span residues 2814–2834, 3089–3109, 3121–3141, 3148–3168, and 3173–3193; these read LLYI…ALLP, ASSI…YYLI, VVVI…VFQV, VYAC…SVIM, and IVMY…AMVI. The segment at 2814 to 3193 is HD2; the sequence is LLYILFFISL…FCVTYVAMVI (380 aa). The region spanning 3207–3304 is the Nsp4C domain; that stretch reads IGVNVCNDST…TASVSTSFLQ (98 aa). Residues 3305–3607 form the Peptidase C30 domain; that stretch reads SGIVKMVSPT…YQQLAGVKLQ (303 aa). Residues His3345 and Cys3449 each act as for 3CL-PRO activity in the active site. Helical transmembrane passes span 3621 to 3641, 3646 to 3666, 3671 to 3691, 3714 to 3734, 3742 to 3762, 3770 to 3790, and 3813 to 3833; these read ILIS…WTIF, THMI…MLLV, FYLT…NYLV, FTYV…IFIT, IFSL…WYFG, LLFI…SLAI, and LILL…GFFS. The segment at 3621–3833 is HD3; that stretch reads ILISTFLFSC…ILSCYWGFFS (213 aa). In terms of domain architecture, RdRp Nsp7 cofactor spans 3895 to 3983; the sequence is SKLTDVKCAN…DYVQDSTVLQ (89 aa). Residues 3984–4180 enclose the RdRp Nsp8 cofactor domain; the sequence is ALQSEFVNMA…YNEVANAVMQ (197 aa). The Nsp9 ssRNA-binding domain occupies 4181-4290; that stretch reads NNELMPHKLK…GTLSSTIRLQ (110 aa). An ExoN/MTase coactivator domain is found at 4291–4428; it reads AGVATEYAAN…CVGSGVAVQS (138 aa). Residues Cys4364, Cys4367, His4373, Cys4380, Cys4406, Cys4409, Cys4417, and Cys4419 each coordinate Zn(2+). 2 zinc fingers span residues 4364 to 4380 and 4406 to 4419; these read CIYC…DGLC and CQVC…SCSC. Residues 4433-4688 enclose the NiRAN domain; sequence FLNRVRGTSV…DCELFVNDSY (256 aa). Positions 4636 and 4645 each coordinate Mn(2+). Residues 4689–4787 form the Nsp12 Interface domain; it reads RQFDLVQYDF…MNLDVDTHRY (99 aa). Residues His4718, Cys4724, Cys4729, Cys4733, and Cys4910 each coordinate Zn(2+). The Nsp12 RNA-dependent RNA polymerase domain maps to 4788 to 5355; the sequence is RLSLKDLLLY…NMYLKSAVMQ (568 aa). The segment at 4790–5004 is rdRp Fingers N-ter; it reads SLKDLLLYAA…HQKCLKSIAA (215 aa). A rdRp Palm N-ter region spans residues 5005 to 5043; sequence TRGVPVVIGTTKFYGGWDDMLRHLIKDVDNPVLMGWDYP. The RdRp catalytic domain occupies 5035 to 5197; that stretch reads PVLMGWDYPK…CYNSDYASKG (163 aa). The segment at 5044–5102 is rdRp Fingers C-ter; it reads KCDRAMPNILRIVSSLVLARKHEFCCSHGDRFYRLANECAQVLSEIVMCGGCYYVKPGG. Zn(2+) is bound by residues His5065, Cys5068, and Cys5069. A rdRp Palm C-ter region spans residues 5103-5238; sequence TSSGDATTAF…TNGPHEFCSQ (136 aa). Active-site residues include Ser5182, Asp5183, and Asp5184. Residues 5239-5355 are rdRp Thumb; that stretch reads HTMLVKIDGD…NMYLKSAVMQ (117 aa). The 113-residue stretch at 5356–5468 folds into the CV ZBD domain; the sequence is SVGACVVCSS…DDFNKIASCK (113 aa). Residues Cys5360, Cys5363, Cys5371, Cys5374, Cys5381, Cys5384, His5388, His5394, Cys5405, Cys5410, Cys5427, and His5430 each contribute to the Zn(2+) site. The 182-residue stretch at 5611–5792 folds into the (+)RNA virus helicase ATP-binding domain; it reads SVPLLFQTNV…MCCLGPDIFL (182 aa). Residue 5636–5643 participates in ATP binding; the sequence is GPPGTGKS. The (+)RNA virus helicase C-terminal domain maps to 5793–5962; the sequence is GNCYRCPKEI…TLSRLHCTTN (170 aa). In terms of domain architecture, ExoN spans 6029-6244; the sequence is FFITKDEAIK…RCLAIYDCFC (216 aa). Catalysis depends on residues Asp6047, Glu6049, and Glu6148. Zn(2+)-binding residues include Cys6164, Cys6167, Cys6183, His6186, His6214, Cys6218, and His6221. Residues His6225 and Asp6230 contribute to the active site. Cys6236 provides a ligand contact to Zn(2+). In terms of domain architecture, N7-MTase spans 6253 to 6479; sequence YPIISNEVSI…NLWNTFTMLQ (227 aa). 6288–6294 lines the S-adenosyl-L-methionine pocket; it reads DIGNPKG. A gpppA-binding region spans residues 6366-6380; it reads CNGGSLYVNKHAFHT. Residues Cys6404, Cys6425, Cys6436, and His6439 each coordinate Zn(2+). The region spanning 6480 to 6540 is the Nsp15 N-terminal oligomerization domain; that stretch reads SLENVIYNLV…NIAVELFTKR (61 aa). The AV-Nsp11N/CoV-Nsp15M domain maps to 6541–6661; sequence SIRHHPELKI…FAMRKDGDDV (121 aa). A NendoU domain is found at 6711-6850; sequence EPRSDLERDF…NDNKIMTFYP (140 aa). Residues His6741, His6756, Lys6796, Lys6899, Asp6983, Lys7023, and Glu7056 contribute to the active site. Residues 6855 to 7149 enclose the Nidovirus-type SAM-dependent 2'-O-MTase domain; sequence TSDWKPGYSM…KEIFVGDSLV (295 aa).

This sequence belongs to the coronaviruses polyprotein 1ab family. Interacts with host PHB and PHB2. As to quaternary structure, interacts with papain-like protease nsp3 and non-structural protein 6. In terms of assembly, monomer. Homodimer. Only the homodimer shows catalytic activity. Interacts with nsp8 and nsp12 to form the replication-transcription complex (RTC): nsp12, nsp7, two subunits of nsp8, and up to two subunits of nsp13. As to quaternary structure, interacts with nsp7, nsp13 and nsp12 to form the replication-transcription complex (RTC): nsp12, nsp7, two subunits of nsp8, and up to two subunits of nsp13. In terms of assembly, interacts with nsp12. Interacts with proofreading exoribonuclease nsp14 and 2'-O-methyltransferase nsp16; these interactions enhance nsp14 and nsp16 enzymatic activities. As to quaternary structure, interacts with nsp7 and nsp8 to form the replication-transcription complex (RTC): nsp12, nsp7, two subunits of nsp8, and up to two subunits of nsp13. Interacts with nsp9. In terms of assembly, interacts with nsp8 to form the replication-transcription complex (RTC): nsp12, nsp7, two subunits of nsp8, and up to two subunits of nsp13. Mn(2+) serves as cofactor. The cofactor is Mg(2+). Specific enzymatic cleavages in vivo by its own proteases yield mature proteins. 3CL-PRO and PL-PRO proteinases are autocatalytically processed.

Its subcellular location is the host membrane. The protein resides in the host cytoplasm. It localises to the host perinuclear region. The protein localises to the host endoplasmic reticulum-Golgi intermediate compartment. The catalysed reaction is RNA(n) + a ribonucleoside 5'-triphosphate = RNA(n+1) + diphosphate. The enzyme catalyses ATP + H2O = ADP + phosphate + H(+). It carries out the reaction Thiol-dependent hydrolysis of ester, thioester, amide, peptide and isopeptide bonds formed by the C-terminal Gly of ubiquitin (a 76-residue protein attached to proteins as an intracellular targeting signal).. It catalyses the reaction a 5'-end (N(7)-methyl 5'-triphosphoguanosine)-ribonucleoside in mRNA + S-adenosyl-L-methionine = a 5'-end (N(7)-methyl 5'-triphosphoguanosine)-(2'-O-methyl-ribonucleoside) in mRNA + S-adenosyl-L-homocysteine + H(+). The catalysed reaction is uridylyl-uridylyl-ribonucleotide-RNA = a 3'-end uridylyl-2',3'-cyclophospho-uridine-RNA + a 5'-end dephospho-ribonucleoside-RNA. The enzyme catalyses a 5'-end diphospho-ribonucleoside in mRNA + GTP + H(+) = a 5'-end (5'-triphosphoguanosine)-ribonucleoside in mRNA + diphosphate. It carries out the reaction a 5'-end (5'-triphosphoguanosine)-ribonucleoside in mRNA + S-adenosyl-L-methionine = a 5'-end (N(7)-methyl 5'-triphosphoguanosine)-ribonucleoside in mRNA + S-adenosyl-L-homocysteine. In terms of biological role, the replicase polyprotein of coronaviruses is a multifunctional protein: it contains the activities necessary for the transcription of negative stranded RNA, leader RNA, subgenomic mRNAs and progeny virion RNA as well as proteinases responsible for the cleavage of the polyprotein into functional products. Its function is as follows. Inhibits host translation by interacting with the 40S ribosomal subunit. The nsp1-40S ribosome complex further induces an endonucleolytic cleavage near the 5'UTR of host mRNAs, targeting them for degradation. Viral mRNAs are not susceptible to nsp1-mediated endonucleolytic RNA cleavage thanks to the presence of a 5'-end leader sequence and are therefore protected from degradation. By suppressing host gene expression, nsp1 facilitates efficient viral gene expression in infected cells and evasion from host immune response. May play a role in the modulation of host cell survival signaling pathway by interacting with host PHB and PHB2. Indeed, these two proteins play a role in maintaining the functional integrity of the mitochondria and protecting cells from various stresses. Functionally, responsible for the cleavages located at the N-terminus of the replicase polyprotein. In addition, PL-PRO possesses a deubiquitinating/deISGylating activity and processes both 'Lys-48'- and 'Lys-63'-linked polyubiquitin chains from cellular substrates. Participates together with nsp4 in the assembly of virally-induced cytoplasmic double-membrane vesicles necessary for viral replication. Antagonizes innate immune induction of type I interferon by blocking the phosphorylation, dimerization and subsequent nuclear translocation of host IRF3. Also prevents host NF-kappa-B signaling. In terms of biological role, participates in the assembly of virally-induced cytoplasmic double-membrane vesicles necessary for viral replication. Its function is as follows. Cleaves the C-terminus of replicase polyprotein at 11 sites. Recognizes substrates containing the core sequence [ILMVF]-Q-|-[SGACN]. Also able to bind an ADP-ribose-1''-phosphate (ADRP). Plays a role in the initial induction of autophagosomes from host endoplasmic reticulum. Later, limits the expansion of these phagosomes that are no longer able to deliver viral components to lysosomes. Functionally, forms a hexadecamer with nsp8 (8 subunits of each) that may participate in viral replication by acting as a primase. Alternatively, may synthesize substantially longer products than oligonucleotide primers. In terms of biological role, forms a hexadecamer with nsp7 (8 subunits of each) that may participate in viral replication by acting as a primase. Alternatively, may synthesize substantially longer products than oligonucleotide primers. Its function is as follows. Forms a primer, NSP9-pU, which is utilized by the polymerase for the initiation of RNA chains. Interacts with ribosome signal recognition particle RNA (SRP). Together with NSP8, suppress protein integration into the cell membrane, thereby disrupting host immune defenses. Plays a pivotal role in viral transcription by stimulating both nsp14 3'-5' exoribonuclease and nsp16 2'-O-methyltransferase activities. Therefore plays an essential role in viral mRNAs cap methylation. Functionally, RNA-directed RNA polymerase that catalyzes the transcription of viral genomic and subgenomic RNAs. Acts in complex with nsp7 and nsp8 to transcribe both the minus and positive strands of genomic RNA. The kinase-like NiRAN domain of NSP12 attaches one or more nucleotides to the amino terminus of NSP9, forming a covalent RNA-protein intermediate that serves as transcription/replication primer. Subgenomic RNAs (sgRNAs) are formed by discontinuous transcription: The polymerase has the ability to pause at transcription-regulating sequences (TRS) and jump to the leader TRS, resulting in a major deletion. This creates a series of subgenomic RNAs that are replicated, transcribed and translated. In addition, Nsp12 is a subunit of the viral RNA capping enzyme that catalyzes the RNA guanylyltransferase reaction for genomic and sub-genomic RNAs. Subsequently, the NiRAN domain transfers RNA to GDP, and forms the core cap structure GpppA-RNA. In terms of biological role, multi-functional protein with a zinc-binding domain in N-terminus displaying RNA and DNA duplex-unwinding activities with 5' to 3' polarity. Activity of helicase is dependent on magnesium. Its function is as follows. Plays a role in viral RNA synthesis through two distinct activities. The N7-guanine methyltransferase activity plays a role in the formation of the cap structure GpppA-RNA. The proofreading exoribonuclease reduces the sensitivity of the virus to RNA mutagens during replication. This activity acts on both ssRNA and dsRNA in a 3'-5' direction. Plays a role in viral transcription/replication and prevents the simultaneous activation of host cell dsRNA sensors, such as MDA5/IFIH1, OAS, and PKR. Acts by degrading the 5'-polyuridines generated during replication of the poly(A) region of viral genomic and subgenomic RNAs. Catalyzes a two-step reaction in which a 2'3'-cyclic phosphate (2'3'-cP) is first generated by 2'-O transesterification, which is then hydrolyzed to a 3'-phosphate (3'-P). If not degraded, poly(U) RNA would hybridize with poly(A) RNA tails and activate host dsRNA sensors. Functionally, methyltransferase that mediates mRNA cap 2'-O-ribose methylation to the 5'-cap structure of viral mRNAs. N7-methyl guanosine cap is a prerequisite for binding of nsp16. Therefore plays an essential role in viral mRNAs cap methylation which is essential to evade immune system. This Homo sapiens (Human) protein is Replicase polyprotein 1ab (rep).